The chain runs to 95 residues: Large ribosomal subunit protein bL25 (95 aa).

This sequence belongs to the bacterial ribosomal protein bL25 family. In terms of assembly, part of the 50S ribosomal subunit; part of the 5S rRNA/L5/L18/L25 subcomplex. Contacts the 5S rRNA. Binds to the 5S rRNA independently of L5 and L18.

This is one of the proteins that binds to the 5S RNA in the ribosome where it forms part of the central protuberance. The sequence is that of Large ribosomal subunit protein bL25 from Yersinia enterocolitica serotype O:8 / biotype 1B (strain NCTC 13174 / 8081).